We begin with the raw amino-acid sequence, 4841 residues long: Nonribosomal peptide synthetase 2 (4841 aa).

An adenylation 1 region spans residues 26–429; it reads VKPPNQNVAL…GRLSDGQVKL (404 aa). Residues 531–604 enclose the Carrier 1 domain; sequence EPVDEFESSL…DIIFAARRQI (74 aa). Serine 565 is subject to O-(pantetheine 4'-phosphoryl)serine. Positions 640-1042 are condensation 1; that stretch reads EEIIPCTPLQ…ILERPTQEIK (403 aa). Positions 1072 to 1463 are adenylation 2; it reads FEDVVRKHPE…GRIDDQVKLR (392 aa). The Carrier 2 domain maps to 1587–1665; sequence EGDWSRMDLV…QLAKHLEGKP (79 aa). The residue at position 1625 (serine 1625) is an O-(pantetheine 4'-phosphoryl)serine. Positions 1702-2043 are condensation 2; the sequence is ILPCTPLQEA…QTVWELEADS (342 aa). In terms of domain architecture, Carrier 3 spans 2139 to 2212; that stretch reads SEVELDVRQV…KIAAKLLENR (74 aa). Serine 2173 is subject to O-(pantetheine 4'-phosphoryl)serine. A condensation 3 region spans residues 2248–2663; sequence AVLPCTPLQS…NHLATEDEAF (416 aa). The tract at residues 2695 to 3090 is adenylation 3; sequence AAVHPNKLAL…GRADDQVKLR (396 aa). Residues 3219 to 3293 form the Carrier 4 domain; sequence QDILVLLYDA…DLANCLAKAA (75 aa). The residue at position 3253 (serine 3253) is an O-(pantetheine 4'-phosphoryl)serine. Residues 3333 to 3735 form a condensation 4 region; the sequence is IAPCSPLQEG…DLAAESPQSE (403 aa). A Carrier 5 domain is found at 3759-3838; the sequence is QNSFEWTSEA…KMITELASIT (80 aa). Serine 3799 is modified (O-(pantetheine 4'-phosphoryl)serine). The interval 3873–4242 is condensation 5; the sequence is SVLPPTHLQE…VEAEAVSDSL (370 aa). One can recognise a Carrier 6 domain in the interval 4318 to 4394; that stretch reads IEWNQNEIGI…EMAQKADTKL (77 aa). Position 4355 is an O-(pantetheine 4'-phosphoryl)serine (serine 4355). Positions 4430–4726 are condensation 6; it reads EVLPALPMQV…DIHLITSESR (297 aa).

Belongs to the NRP synthetase family.

It participates in siderophore biosynthesis. Functionally, nonribosomal peptide synthetase; part of the gene cluster that mediates the biosynthesis of hydroxamate-containing siderophores that play a critical role in virulence. Gibberella zeae produces extracellular coprogen-type siderophores as well as the intracellular siderophore ferricrocin. The role of extracellular siderophores is to supply iron to the fungus during plant infection, and the intracellular ferricrocin is required for intracellular iron distribution and storage with a crucial role in ascus and ascospore development. SID1 catalyzes the conversion of L-ornithine to N(5)-hydroxyornithine, the first step in the biosynthesis of all hydroxamate-containing siderophores. The assembly of extracellular coprogen-type siderophores is performed by the nonribosomal peptide synthetase (NRPS) NPS6 whereas the intracellular siderophore ferricrocin is assembled by NPS2. The polypeptide is Nonribosomal peptide synthetase 2 (Gibberella zeae (strain ATCC MYA-4620 / CBS 123657 / FGSC 9075 / NRRL 31084 / PH-1) (Wheat head blight fungus)).